We begin with the raw amino-acid sequence, 199 residues long: MSERLIQLAANLKKVLGKRIQSVEIALGEVTVVVYADTYFESAMLMRDDPSLAFEQLIDLCGVDYQDFRDGAWAGQRFGVVSHLLSLEHNWRLRVRVFAPDDSYPLVASVSPVWNSANWFEREAFDLYGILFDGHDDLRRILTDYGFIGHPFRKDFPISGNVEMRYDPELKRVIYQPVTIEAREITPRIVREEQYGGPV.

The protein belongs to the complex I 30 kDa subunit family. In terms of assembly, NDH-1 is composed of 14 different subunits. Subunits NuoB, C, D, E, F, and G constitute the peripheral sector of the complex.

The protein localises to the cell inner membrane. It carries out the reaction a quinone + NADH + 5 H(+)(in) = a quinol + NAD(+) + 4 H(+)(out). Its function is as follows. NDH-1 shuttles electrons from NADH, via FMN and iron-sulfur (Fe-S) centers, to quinones in the respiratory chain. The immediate electron acceptor for the enzyme in this species is believed to be ubiquinone. Couples the redox reaction to proton translocation (for every two electrons transferred, four hydrogen ions are translocated across the cytoplasmic membrane), and thus conserves the redox energy in a proton gradient. In Polynucleobacter necessarius subsp. necessarius (strain STIR1), this protein is NADH-quinone oxidoreductase subunit C.